The following is a 482-amino-acid chain: tRNA sulfurtransferase (482 aa).

The region spanning 61–165 is the THUMP domain; it reads PAIRDALTRI…NDRLLLVKGR (105 aa). ATP is bound by residues 183–184, Lys265, Gly287, and Gln296; that span reads LI. Residues Cys344 and Cys456 are joined by a disulfide bond. In terms of domain architecture, Rhodanese spans 404-482; that stretch reads FGANDAILDI…GFSNVKVYRP (79 aa). Residue Cys456 is the Cysteine persulfide intermediate of the active site.

It belongs to the ThiI family.

The protein localises to the cytoplasm. The catalysed reaction is [ThiI sulfur-carrier protein]-S-sulfanyl-L-cysteine + a uridine in tRNA + 2 reduced [2Fe-2S]-[ferredoxin] + ATP + H(+) = [ThiI sulfur-carrier protein]-L-cysteine + a 4-thiouridine in tRNA + 2 oxidized [2Fe-2S]-[ferredoxin] + AMP + diphosphate. It catalyses the reaction [ThiS sulfur-carrier protein]-C-terminal Gly-Gly-AMP + S-sulfanyl-L-cysteinyl-[cysteine desulfurase] + AH2 = [ThiS sulfur-carrier protein]-C-terminal-Gly-aminoethanethioate + L-cysteinyl-[cysteine desulfurase] + A + AMP + 2 H(+). The protein operates within cofactor biosynthesis; thiamine diphosphate biosynthesis. Catalyzes the ATP-dependent transfer of a sulfur to tRNA to produce 4-thiouridine in position 8 of tRNAs, which functions as a near-UV photosensor. Also catalyzes the transfer of sulfur to the sulfur carrier protein ThiS, forming ThiS-thiocarboxylate. This is a step in the synthesis of thiazole, in the thiamine biosynthesis pathway. The sulfur is donated as persulfide by IscS. The protein is tRNA sulfurtransferase of Klebsiella pneumoniae subsp. pneumoniae (strain ATCC 700721 / MGH 78578).